The chain runs to 173 residues: Beta-defensin 129 (173 aa).

Positions 1–19 (MKLLFPIFASLMLQYKVNT) are cleaved as a signal peptide. Intrachain disulfides connect cysteine 27–cysteine 53, cysteine 34–cysteine 48, and cysteine 38–cysteine 54. The segment at 144–173 (STKSNIKESRDSATASPPPAPPPPNTLPTP) is disordered. The segment covering 159–173 (SPPPAPPPPNTLPTP) has biased composition (pro residues).

The protein belongs to the beta-defensin family.

The protein resides in the secreted. Its function is as follows. Has antibacterial activity. The sequence is that of Beta-defensin 129 (DEFB129) from Hylobates lar (Lar gibbon).